The chain runs to 247 residues: Ubiquinone biosynthesis O-methyltransferase (247 aa).

S-adenosyl-L-methionine-binding residues include Arg-45, Gly-65, Asp-86, and Leu-130.

The protein belongs to the methyltransferase superfamily. UbiG/COQ3 family.

It carries out the reaction a 3-demethylubiquinol + S-adenosyl-L-methionine = a ubiquinol + S-adenosyl-L-homocysteine + H(+). The enzyme catalyses a 3-(all-trans-polyprenyl)benzene-1,2-diol + S-adenosyl-L-methionine = a 2-methoxy-6-(all-trans-polyprenyl)phenol + S-adenosyl-L-homocysteine + H(+). It participates in cofactor biosynthesis; ubiquinone biosynthesis. O-methyltransferase that catalyzes the 2 O-methylation steps in the ubiquinone biosynthetic pathway. This is Ubiquinone biosynthesis O-methyltransferase from Alkalilimnicola ehrlichii (strain ATCC BAA-1101 / DSM 17681 / MLHE-1).